The following is a 445-amino-acid chain: tRNA-2-methylthio-N(6)-dimethylallyladenosine synthase (445 aa).

One can recognise an MTTase N-terminal domain in the interval 3–124 (KKLYIKTYGC…LPELISKVVR (122 aa)). Residues Cys12, Cys48, Cys87, Cys162, Cys166, and Cys169 each contribute to the [4Fe-4S] cluster site. In terms of domain architecture, Radical SAM core spans 148-380 (YPQGASSFIS…QQELTAQQLA (233 aa)). The region spanning 383–445 (ESCVGSIMKV…ASNSLTGEVI (63 aa)) is the TRAM domain.

It belongs to the methylthiotransferase family. MiaB subfamily. As to quaternary structure, monomer. The cofactor is [4Fe-4S] cluster.

The protein localises to the cytoplasm. It catalyses the reaction N(6)-dimethylallyladenosine(37) in tRNA + (sulfur carrier)-SH + AH2 + 2 S-adenosyl-L-methionine = 2-methylsulfanyl-N(6)-dimethylallyladenosine(37) in tRNA + (sulfur carrier)-H + 5'-deoxyadenosine + L-methionine + A + S-adenosyl-L-homocysteine + 2 H(+). Catalyzes the methylthiolation of N6-(dimethylallyl)adenosine (i(6)A), leading to the formation of 2-methylthio-N6-(dimethylallyl)adenosine (ms(2)i(6)A) at position 37 in tRNAs that read codons beginning with uridine. The protein is tRNA-2-methylthio-N(6)-dimethylallyladenosine synthase of Rickettsia felis (strain ATCC VR-1525 / URRWXCal2) (Rickettsia azadi).